The primary structure comprises 162 residues: ATP synthase subunit b (162 aa).

A helical membrane pass occupies residues 6 to 26; it reads PDIGLLFWMLLSFGIVFFVAA.

It belongs to the ATPase B chain family. In terms of assembly, F-type ATPases have 2 components, F(1) - the catalytic core - and F(0) - the membrane proton channel. F(1) has five subunits: alpha(3), beta(3), gamma(1), delta(1), epsilon(1). F(0) has three main subunits: a(1), b(2) and c(10-14). The alpha and beta chains form an alternating ring which encloses part of the gamma chain. F(1) is attached to F(0) by a central stalk formed by the gamma and epsilon chains, while a peripheral stalk is formed by the delta and b chains.

Its subcellular location is the cell inner membrane. Its function is as follows. F(1)F(0) ATP synthase produces ATP from ADP in the presence of a proton or sodium gradient. F-type ATPases consist of two structural domains, F(1) containing the extramembraneous catalytic core and F(0) containing the membrane proton channel, linked together by a central stalk and a peripheral stalk. During catalysis, ATP synthesis in the catalytic domain of F(1) is coupled via a rotary mechanism of the central stalk subunits to proton translocation. Component of the F(0) channel, it forms part of the peripheral stalk, linking F(1) to F(0). The polypeptide is ATP synthase subunit b (Azobacteroides pseudotrichonymphae genomovar. CFP2).